A 396-amino-acid chain; its full sequence is Zinc metalloproteinase nas-24 (396 aa).

The signal sequence occupies residues 1-20 (MTRVVHIIGAAFLLSSYAYC). The region spanning 44-230 (ERLGSKWLGG…YKINQYYGCG (187 aa)) is the Peptidase M12A domain. 2 N-linked (GlcNAc...) asparagine glycosylation sites follow: Asn63 and Asn79. Intrachain disulfides connect Cys82–Cys229, Cys105–Cys129, Cys231–Cys251, and Cys253–Cys262. Position 137 (His137) interacts with Zn(2+). Glu138 is an active-site residue. Positions 141 and 147 each coordinate Zn(2+). In terms of domain architecture, EGF-like spans 224 to 263 (NQYYGCGCSTQLECKNGGYTSPSDCSRCNCPKGFFGKLCN). Asn310 carries N-linked (GlcNAc...) asparagine glycosylation.

Zn(2+) serves as cofactor.

The protein resides in the secreted. Metalloprotease. The chain is Zinc metalloproteinase nas-24 (nas-24) from Caenorhabditis elegans.